Here is a 272-residue protein sequence, read N- to C-terminus: Hydroxyethylthiazole kinase (272 aa).

Residue methionine 46 coordinates substrate. ATP is bound by residues arginine 122 and threonine 168. Glycine 195 provides a ligand contact to substrate.

The protein belongs to the Thz kinase family. Mg(2+) serves as cofactor.

The enzyme catalyses 5-(2-hydroxyethyl)-4-methylthiazole + ATP = 4-methyl-5-(2-phosphooxyethyl)-thiazole + ADP + H(+). It functions in the pathway cofactor biosynthesis; thiamine diphosphate biosynthesis; 4-methyl-5-(2-phosphoethyl)-thiazole from 5-(2-hydroxyethyl)-4-methylthiazole: step 1/1. Catalyzes the phosphorylation of the hydroxyl group of 4-methyl-5-beta-hydroxyethylthiazole (THZ). In Alkaliphilus metalliredigens (strain QYMF), this protein is Hydroxyethylthiazole kinase.